The following is a 445-amino-acid chain: Proline--tRNA ligase (445 aa).

It belongs to the class-II aminoacyl-tRNA synthetase family. ProS type 2 subfamily. As to quaternary structure, homodimer.

The protein resides in the cytoplasm. It catalyses the reaction tRNA(Pro) + L-proline + ATP = L-prolyl-tRNA(Pro) + AMP + diphosphate. Catalyzes the attachment of proline to tRNA(Pro) in a two-step reaction: proline is first activated by ATP to form Pro-AMP and then transferred to the acceptor end of tRNA(Pro). This is Proline--tRNA ligase from Cereibacter sphaeroides (strain ATCC 17025 / ATH 2.4.3) (Rhodobacter sphaeroides).